We begin with the raw amino-acid sequence, 457 residues long: NADH-quinone oxidoreductase subunit N (457 aa).

14 helical membrane passes run 2–22, 25–45, 60–80, 92–112, 114–134, 149–169, 188–208, 222–242, 253–273, 283–303, 310–330, 353–373, 382–402, and 431–451; these read NAIILISVLGILSMMSEFIGL, LIYPIILISLIGILGYNACTF, NYSVAFGSLLITITLFWFILF, GDHYALILFSTVGGLVLVSFS, MSMLFLGVEILSIPLYILAGS, FILGSFATGIMLLGIALIYGA, FFIGITLLSIAFAFKVSAVPF, FITAFMSTFVKVAAFGAFYLM, YLSHTLIGLSALTIVVGNIAA, LAFSGVSQAGYMLMVFPILTI, FVYLAGYAIANLIAIYIVQVV, AFVLSLSLISLAGIPPAAGFF, VIHAGNIYLVLIAILGSLISV, and VILAIMSALVVLIGLFPDILL.

The protein belongs to the complex I subunit 2 family. NDH-1 is composed of 14 different subunits. Subunits NuoA, H, J, K, L, M, N constitute the membrane sector of the complex.

Its subcellular location is the cell inner membrane. It carries out the reaction a quinone + NADH + 5 H(+)(in) = a quinol + NAD(+) + 4 H(+)(out). Its function is as follows. NDH-1 shuttles electrons from NADH, via FMN and iron-sulfur (Fe-S) centers, to quinones in the respiratory chain. The immediate electron acceptor for the enzyme in this species is believed to be a menaquinone. Couples the redox reaction to proton translocation (for every two electrons transferred, four hydrogen ions are translocated across the cytoplasmic membrane), and thus conserves the redox energy in a proton gradient. In Cytophaga hutchinsonii (strain ATCC 33406 / DSM 1761 / CIP 103989 / NBRC 15051 / NCIMB 9469 / D465), this protein is NADH-quinone oxidoreductase subunit N.